The following is a 1210-amino-acid chain: Homeodomain-interacting protein kinase 1 (1210 aa).

Lysine 25 is covalently cross-linked (Glycyl lysine isopeptide (Lys-Gly) (interchain with G-Cter in SUMO); alternate). Lysine 25 is covalently cross-linked (Glycyl lysine isopeptide (Lys-Gly) (interchain with G-Cter in SUMO2); alternate). Residues lysine 120 and lysine 124 each participate in a glycyl lysine isopeptide (Lys-Gly) (interchain with G-Cter in SUMO2) cross-link. The Protein kinase domain maps to 190 to 518 (YEVLEFLGRG…PLKTLNHQFV (329 aa)). ATP-binding positions include 196 to 204 (LGRGTFGQV) and lysine 219. Aspartate 315 serves as the catalytic Proton acceptor. The segment at 835–856 (QQQSSSLPSKKNKQSAPVSSKS) is disordered. A Nuclear localization signal 1 (NLS1) motif is present at residues 844-847 (KKNK). Serine 872 carries the phosphoserine modification. The tract at residues 885–1093 (PVQDQHQPII…FQHGSPLHST (209 aa)) is interaction with TP53. The tract at residues 891–998 (QPIIIPDTPS…PLKTQLGDCT (108 aa)) is required for localization to nuclear speckles. The interval 902-926 (PVSVITIRSDTDEEEDNKYKPNSSS) is SUMO interaction motifs (SIM); required for nuclear localization and kinase activity. Residues 938–981 (TVNDSPDSDSSLSSPHPTDTLSALRGNSGTLLEGPGRPAADGIG) are disordered. The span at 941–959 (DSPDSDSSLSSPHPTDTLS) shows a compositional bias: low complexity. Residue lysine 991 forms a Glycyl lysine isopeptide (Lys-Gly) (interchain with G-Cter in SUMO2) linkage. 2 disordered regions span residues 1046–1069 (LSQN…APRR) and 1084–1104 (FQHG…APAH). Low complexity-rich tracts occupy residues 1047-1063 (SQNQ…ERSS) and 1095-1104 (HPHLAPAPAH). At serine 1200 the chain carries Phosphoserine. A Glycyl lysine isopeptide (Lys-Gly) (interchain with G-Cter in SUMO) cross-link involves residue lysine 1203.

It belongs to the protein kinase superfamily. CMGC Ser/Thr protein kinase family. HIPK subfamily. As to quaternary structure, interacts with Nkx1-2, Nkx2-5, MYB, PARK7, DAXX and p53/TP53. Part of a cytoplasmic complex made of HIPK1, DAB2IP and MAP3K5 in response to TNF. This complex formation promotes MAP3K5-JNK activation and subsequent apoptosis. Post-translationally, phosphorylated and activated by JNK1. Autophosphorylated. In terms of processing, sumoylated. When conjugated it is directed to nuclear speckles. SENP1-mediated desumoylation is mediated by TNF in response to stress stimuli, triggering transient translocation from nucleus to cytoplasm. In terms of tissue distribution, ubiquitously expressed, with high levels in reproductive tissues. Expressed in the epithelial layer of mammary gland, uterus and epididymis, in the corpus luteum, and in post-meiotic round spermatids.

The protein resides in the nucleus. Its subcellular location is the cytoplasm. The protein localises to the nucleus speckle. It carries out the reaction L-seryl-[protein] + ATP = O-phospho-L-seryl-[protein] + ADP + H(+). The enzyme catalyses L-threonyl-[protein] + ATP = O-phospho-L-threonyl-[protein] + ADP + H(+). In terms of biological role, serine/threonine-protein kinase involved in transcription regulation and TNF-mediated cellular apoptosis. Plays a role as a corepressor for homeodomain transcription factors. Phosphorylates DAXX and MYB. Phosphorylates DAXX in response to stress, and mediates its translocation from the nucleus to the cytoplasm. Inactivates MYB transcription factor activity by phosphorylation. Prevents MAP3K5-JNK activation in the absence of TNF. TNF triggers its translocation to the cytoplasm in response to stress stimuli, thus activating nuclear MAP3K5-JNK by derepression and promoting apoptosis. May be involved in anti-oxidative stress responses. Involved in the regulation of eye size, lens formation and retinal lamination during late embryogenesis. Promotes angiogenesis and to be involved in erythroid differentiation. May be involved in malignant squamous cell tumor formation. Phosphorylates PAGE4 at 'Thr-51' which is critical for the ability of PAGE4 to potentiate the transcriptional activator activity of JUN. This Mus musculus (Mouse) protein is Homeodomain-interacting protein kinase 1 (Hipk1).